Consider the following 294-residue polypeptide: Probable enoyl-CoA hydratase 2 (294 aa).

(3R)-3-hydroxydecanoyl-CoA is bound by residues 84–85 (HG), Lys-113, 190–195 (DLNPLH), Gly-213, and Phe-243. The region spanning 165–269 (DRAPDAISKQ…INPTTILFQS (105 aa)) is the MaoC-like domain. The Microbody targeting signal motif lies at 292 to 294 (GSL).

It belongs to the short-chain dehydrogenases/reductases (SDR) family.

It localises to the peroxisome. It carries out the reaction a (3R)-3-hydroxyacyl-CoA = a (2E)-enoyl-CoA + H2O. The sequence is that of Probable enoyl-CoA hydratase 2 (mfeB) from Dictyostelium discoideum (Social amoeba).